We begin with the raw amino-acid sequence, 490 residues long: Lignostilbene-alpha,beta-dioxygenase isozyme III (490 aa).

Positions 167, 218, 285, and 477 each coordinate Fe cation.

It belongs to the carotenoid oxygenase family. Homodimer of two beta subunits. Fe(2+) is required as a cofactor.

It carries out the reaction 1,2-bis(4-hydroxy-3-methoxyphenyl)ethylene + O2 = 2 vanillin. With respect to regulation, activity is high with beta-5 type stilbene and minimal with beta-1 type stilbene. A 4-hydroxyl group and trans-stilbene structure is essential for the binding of substrates to the enzyme. Its function is as follows. Catalyzes the cleavage of the interphenyl double bond (C alpha-C beta) of lignin-derived polyphenolic diaryl-propane type compounds (Stilbene). The sequence is that of Lignostilbene-alpha,beta-dioxygenase isozyme III from Sphingomonas paucimobilis (Pseudomonas paucimobilis).